The following is a 91-amino-acid chain: Small ribosomal subunit protein uS19 (91 aa).

It belongs to the universal ribosomal protein uS19 family.

In terms of biological role, protein S19 forms a complex with S13 that binds strongly to the 16S ribosomal RNA. This Pseudomonas syringae pv. syringae (strain B728a) protein is Small ribosomal subunit protein uS19.